The sequence spans 151 residues: FUN14 domain-containing protein 1 (151 aa).

Positions 14 to 17 (YEVL) match the YXXL motif. 3 helical membrane passes run 44 to 64 (YSVA…GFLF), 71 to 91 (AATA…GGYI), and 130 to 150 (FIKK…LGLA).

This sequence belongs to the FUN14 family.

The protein resides in the mitochondrion outer membrane. Its function is as follows. Acts as an activator of hypoxia-induced mitophagy, an important mechanism for mitochondrial quality control. This Xenopus tropicalis (Western clawed frog) protein is FUN14 domain-containing protein 1 (fundc1).